The chain runs to 489 residues: Glycogen synthase (489 aa).

An ADP-alpha-D-glucose-binding site is contributed by lysine 17.

It belongs to the glycosyltransferase 1 family. Bacterial/plant glycogen synthase subfamily.

The enzyme catalyses [(1-&gt;4)-alpha-D-glucosyl](n) + ADP-alpha-D-glucose = [(1-&gt;4)-alpha-D-glucosyl](n+1) + ADP + H(+). Its pathway is glycan biosynthesis; glycogen biosynthesis. In terms of biological role, synthesizes alpha-1,4-glucan chains using ADP-glucose. This chain is Glycogen synthase, found in Nitratidesulfovibrio vulgaris (strain ATCC 29579 / DSM 644 / CCUG 34227 / NCIMB 8303 / VKM B-1760 / Hildenborough) (Desulfovibrio vulgaris).